Consider the following 377-residue polypeptide: Erythronate-4-phosphate dehydrogenase (377 aa).

Substrate contacts are provided by Ser45 and Thr67. NAD(+)-binding positions include Asp147, 210-212 (ASR), and Asp236. Residue Arg212 is part of the active site. Residue Glu241 is part of the active site. His258 acts as the Proton donor in catalysis. Gly261 provides a ligand contact to NAD(+). Substrate is bound at residue Tyr262.

It belongs to the D-isomer specific 2-hydroxyacid dehydrogenase family. PdxB subfamily. Homodimer.

The protein resides in the cytoplasm. It carries out the reaction 4-phospho-D-erythronate + NAD(+) = (R)-3-hydroxy-2-oxo-4-phosphooxybutanoate + NADH + H(+). It functions in the pathway cofactor biosynthesis; pyridoxine 5'-phosphate biosynthesis; pyridoxine 5'-phosphate from D-erythrose 4-phosphate: step 2/5. Its function is as follows. Catalyzes the oxidation of erythronate-4-phosphate to 3-hydroxy-2-oxo-4-phosphonooxybutanoate. The sequence is that of Erythronate-4-phosphate dehydrogenase from Aeromonas salmonicida (strain A449).